The primary structure comprises 283 residues: Myeloid differentiation primary response protein MyD88-B (283 aa).

The 79-residue stretch at 27 to 105 (RLCLYLNPNA…DILTDLAPLI (79 aa)) folds into the Death domain. Residues 106–143 (EADCKKYLEKKHGPLPLQDDNVDSSEQYRITKSDDPYG) form an intermediate domain region. A TIR domain is found at 147-281 (ETFDAFICCC…WFWDKLAKAL (135 aa)).

The protein localises to the cytoplasm. Adapter protein involved in the Toll-like receptor and IL-1 receptor signaling pathway in the innate immune response. Activates expression of target genes in the Spemann organizer region during early embryonic development. Is required for normal axis formation. The protein is Myeloid differentiation primary response protein MyD88-B (myd88-b) of Xenopus laevis (African clawed frog).